A 101-amino-acid chain; its full sequence is Vacuolar ATPase assembly integral membrane protein VMA21 (101 aa).

Over 1–25 (MERLDKAALNALQPSDFRNESSLAS) the chain is Cytoplasmic. The chain crosses the membrane as a helical span at residues 26–46 (TLKTLLFFTALMITVPIGLYF). The Lumenal portion of the chain corresponds to 47 to 65 (TTKSYVFEGAFGMSNRDSY). A helical membrane pass occupies residues 66–86 (FYAAIVAVVAVHVVLALFVYV). The Cytoplasmic segment spans residues 87-101 (AWNEGSRQWREGKQD).

This sequence belongs to the VMA21 family. Associates with the V0 complex of the vacuolar ATPase (V-ATPase). Interacts with ATP6AP2.

It localises to the endoplasmic reticulum membrane. The protein resides in the endoplasmic reticulum-Golgi intermediate compartment membrane. It is found in the cytoplasmic vesicle. Its subcellular location is the COPII-coated vesicle membrane. Required for the assembly of the V0 complex of the vacuolar ATPase (V-ATPase) in the endoplasmic reticulum. The sequence is that of Vacuolar ATPase assembly integral membrane protein VMA21 from Bos taurus (Bovine).